We begin with the raw amino-acid sequence, 491 residues long: Transcription factor unc-3 (491 aa).

Residues 66-69 (RKSN) are interaction with DNA. Residues 154-173 (CRVLLTHEVMCSRCCEKKSC) form a C5-type zinc finger. Interaction with DNA regions lie at residues 200-207 (NCLKNAGN) and 239-242 (NNSK). The segment at 240-261 (NSKHGRRTKRTDASDDSEYSES) is disordered. The IPT/TIG domain occupies 269–355 (PVIKALFPSE…SRGTPLRFSY (87 aa)).

This sequence belongs to the COE family. May homodimerise. Interacts with jmjd-3.1. May interact with GFI1 homolog pag-3.

It is found in the nucleus. Transcription factor. Involved in motor neuron fate determination and maintenance, acting as an activator of gene expression in a subset of motor neurons. May act in concert with GFI1 homolog pag-3 in motor neuron fate determination. Required to maintain the expression of transcriptional repressors bnc-1 and cfi-1, which play roles in the cell fate of motor neurons. May play a role in the expression of proteins essential for axonal pathfinding and/or neuronal differentiation in both sensory and motor neurons. Cooperates with jmjd-3.1 and wdr-5.1 to ensure robust transdifferentiation of the Y rectal cell to the PDA motor neuron during larval development. This chain is Transcription factor unc-3 (unc-3), found in Caenorhabditis elegans.